The following is a 1025-amino-acid chain: Multidrug resistance protein MdtC (1025 aa).

12 helical membrane passes run phenylalanine 3–leucine 23, glutamate 333–leucine 353, isoleucine 360–cysteine 380, leucine 387–leucine 407, valine 431–leucine 451, phenylalanine 463–proline 483, leucine 528–proline 548, valine 853–serine 873, valine 875–leucine 895, leucine 897–valine 917, proline 953–glycine 973, and isoleucine 984–valine 1004.

This sequence belongs to the resistance-nodulation-cell division (RND) (TC 2.A.6) family. MdtC subfamily. In terms of assembly, part of a tripartite efflux system composed of MdtA, MdtB and MdtC. MdtC forms a heteromultimer with MdtB.

The protein resides in the cell inner membrane. In terms of biological role, the MdtABC tripartite complex confers resistance against novobiocin and deoxycholate. This chain is Multidrug resistance protein MdtC, found in Escherichia coli (strain UTI89 / UPEC).